Consider the following 307-residue polypeptide: Small ribosomal subunit protein uS2 (307 aa).

A disordered region spans residues 256–307; the sequence is GGEAEQAAVDATGGAATEETPAAESTGAASEAAAVSEAAEPATEQPAADAEA. The span at 259 to 307 shows a compositional bias: low complexity; it reads AEQAAVDATGGAATEETPAAESTGAASEAAAVSEAAEPATEQPAADAEA.

Belongs to the universal ribosomal protein uS2 family.

The chain is Small ribosomal subunit protein uS2 from Nocardioides sp. (strain ATCC BAA-499 / JS614).